A 258-amino-acid chain; its full sequence is UPF0246 protein IL2146 (258 aa).

It belongs to the UPF0246 family.

This is UPF0246 protein IL2146 from Idiomarina loihiensis (strain ATCC BAA-735 / DSM 15497 / L2-TR).